The chain runs to 314 residues: Methylglutaconyl-CoA hydratase, mitochondrial (314 aa).

A mitochondrion-targeting transit peptide spans 1-42; sequence MAAAAPGALGALRTGRVRLVAACCARLGPAAWARGTAPRRGY. Lysine 75 carries the N6-acetyllysine; alternate modification. Lysine 75 carries the post-translational modification N6-succinyllysine; alternate. Residues 80–94 are RNA-binding; sequence KNLLKMLSKAVDALK. Lysine 84 carries the post-translational modification N6-succinyllysine. N6-acetyllysine; alternate is present on residues lysine 88 and lysine 119. Residues lysine 88 and lysine 119 each carry the N6-succinyllysine; alternate modification. Lysine 123 and lysine 135 each carry N6-succinyllysine. Lysine 179 and lysine 186 each carry N6-acetyllysine; alternate. An N6-succinyllysine; alternate mark is found at lysine 179 and lysine 186. N6-succinyllysine is present on lysine 304.

This sequence belongs to the enoyl-CoA hydratase/isomerase family. In terms of assembly, homohexamer. As to expression, detected in heart, brain, liver, spleen, skeletal muscle and kidney. Expressed in brain, kidney, liver and spleen tissue (at protein level).

It localises to the mitochondrion. The enzyme catalyses (3S)-3-hydroxy-3-methylglutaryl-CoA = 3-methyl-(2E)-glutaconyl-CoA + H2O. It catalyses the reaction (3S)-citramalyl-CoA = itaconyl-CoA + H2O. It carries out the reaction 3-hydroxyisovaleryl-CoA = 3-methylbut-2-enoyl-CoA + H2O. The catalysed reaction is (S)-3-hydroxyglutaryl-CoA = (2E)-glutaconyl-CoA + H2O. The protein operates within amino-acid degradation; L-leucine degradation; (S)-3-hydroxy-3-methylglutaryl-CoA from 3-isovaleryl-CoA: step 3/3. In terms of biological role, catalyzes the fifth step in the leucine degradation pathway, the reversible hydration of 3-methylglutaconyl-CoA (3-MG-CoA) to 3-hydroxy-3-methylglutaryl-CoA (HMG-CoA). Can catalyze the reverse reaction but at a much lower rate in vitro. HMG-CoA is then quickly degraded by another enzyme (such as HMG-CoA lyase) to give acetyl-CoA and acetoacetate. Uses other substrates such as (2E)-glutaconyl-CoA efficiently in vitro, and to a lesser extent 3-methylcrotonyl-CoA (3-methyl-(2E)-butenoyl-CoA), crotonyl-CoA ((2E)-butenoyl-CoA) and 3-hydroxybutanoyl-CoA (the missing carboxylate reduces affinity to the active site). Originally it was identified as an RNA-binding protein as it binds to AU-rich elements (AREs) in vitro. AREs direct rapid RNA degradation and mRNA deadenylation. Might have itaconyl-CoA hydratase activity, converting itaconyl-CoA into citramalyl-CoA in the C5-dicarboxylate catabolism pathway. The C5-dicarboxylate catabolism pathway is required to detoxify itaconate, an antimicrobial metabolite and immunomodulator produced by macrophages during certain infections, that can act as a vitamin B12-poisoning metabolite. In Mus musculus (Mouse), this protein is Methylglutaconyl-CoA hydratase, mitochondrial (Auh).